A 315-amino-acid chain; its full sequence is MGFGQVVIGPPGSGKTVYCNGMSQFLQSIGRKVSIINLDPSNENIPYEPAVNIQELIDFQTVVNETDLGPNGGLIFCMEYLEKNLDWLKEKLLPLKDHYIIFDCPGQVELYTHYKIISNILDNIMKWSFRLTVIQVFDSFYCKNPSNFISILLVSLSGMVRIELPHINVLSKMDLIEQNGPLDFNLDFYTDVLDLKYLDAFLDKDPRLKKYSKLNKAIAGVIEDFSLVSFIPLNIMDKKSVANLIASIDKSNGYIYGSLDTNTAILEIQERETQWNFDKYQETQEKYYKSYEDDDVIFENDQDEDYDEFSKYLNR.

A GTP-binding site is contributed by 12–17 (GSGKTV). Positions 69–71 (GPN) match the Gly-Pro-Asn (GPN)-loop; involved in dimer interface motif. 171-174 (SKMD) provides a ligand contact to GTP.

This sequence belongs to the GPN-loop GTPase family. Heterodimers with gpn1 or gpn3. Binds to RNA polymerase II (RNAPII).

Small GTPase required for proper localization of RNA polymerase II and III (RNAPII and RNAPIII). May act at an RNAP assembly step prior to nuclear import. In Dictyostelium discoideum (Social amoeba), this protein is GPN-loop GTPase 2 homolog (gpn2).